An 87-amino-acid polypeptide reads, in one-letter code: Small ribosomal subunit protein uS15 (87 aa).

Belongs to the universal ribosomal protein uS15 family. As to quaternary structure, part of the 30S ribosomal subunit. Forms a bridge to the 50S subunit in the 70S ribosome, contacting the 23S rRNA.

Its function is as follows. One of the primary rRNA binding proteins, it binds directly to 16S rRNA where it helps nucleate assembly of the platform of the 30S subunit by binding and bridging several RNA helices of the 16S rRNA. Functionally, forms an intersubunit bridge (bridge B4) with the 23S rRNA of the 50S subunit in the ribosome. The sequence is that of Small ribosomal subunit protein uS15 from Ruminiclostridium cellulolyticum (strain ATCC 35319 / DSM 5812 / JCM 6584 / H10) (Clostridium cellulolyticum).